A 196-amino-acid chain; its full sequence is ATP-dependent Clp protease proteolytic subunit 1 (196 aa).

Residue Ser-96 is the Nucleophile of the active site. His-121 is an active-site residue.

Belongs to the peptidase S14 family. In terms of assembly, fourteen ClpP subunits assemble into 2 heptameric rings which stack back to back to give a disk-like structure with a central cavity, resembling the structure of eukaryotic proteasomes.

The protein localises to the cytoplasm. The enzyme catalyses Hydrolysis of proteins to small peptides in the presence of ATP and magnesium. alpha-casein is the usual test substrate. In the absence of ATP, only oligopeptides shorter than five residues are hydrolyzed (such as succinyl-Leu-Tyr-|-NHMec, and Leu-Tyr-Leu-|-Tyr-Trp, in which cleavage of the -Tyr-|-Leu- and -Tyr-|-Trp bonds also occurs).. In terms of biological role, cleaves peptides in various proteins in a process that requires ATP hydrolysis. Has a chymotrypsin-like activity. Plays a major role in the degradation of misfolded proteins. The protein is ATP-dependent Clp protease proteolytic subunit 1 of Prochlorococcus marinus (strain NATL2A).